A 247-amino-acid chain; its full sequence is Adiponectin (247 aa).

Residues 1–17 form the signal peptide; the sequence is MLLLQALLFLLILPSHA. 2 O-linked (GalNAc...) threonine glycosylation sites follow: Thr23 and Thr24. Position 36 is a 5-hydroxylysine (Lys36). At Cys39 the chain carries S-(2-succinyl)cysteine. The segment at 44-105 is disordered; that stretch reads AGIPGHPGHN…GFPGTPGRKG (62 aa). Positions 45–110 constitute a Collagen-like domain; sequence GIPGHPGHNG…PGRKGEPGEA (66 aa). 3 positions are modified to 4-hydroxyproline: Pro47, Pro50, and Pro56. The segment covering 58-73 has biased composition (basic and acidic residues); the sequence is RDGRDGTPGEKGEKGD. Lys68, Lys71, and Lys80 each carry 5-hydroxylysine; alternate. Residues Lys68, Lys71, and Lys80 are each glycosylated (O-linked (Gal...) hydroxylysine; alternate). Residue Pro94 is modified to 4-hydroxyproline. Lys104 is subject to 5-hydroxylysine; alternate. Lys104 is a glycosylation site (O-linked (Gal...) hydroxylysine; alternate). Positions 111-247 constitute a C1q domain; the sequence is AYVYRSAFSV…TGFLLYHDTN (137 aa).

In terms of assembly, homomultimer. Forms trimers, hexamers and 12- to 18-mers. The trimers (low molecular weight complexes / LMW) are assembled via non-covalent interactions of the collagen-like domains in a triple helix and hydrophobic interactions within the globular C1q domain. Several trimers can associate to form disulfide-linked hexamers (middle molecular weight complexes / MMW) and larger complexes (higher molecular weight / HMW). The HMW-complex assembly is also modulated by the degree of lysine hydroxylation and glycosylation. LMW, MMW and HMW complexes bind to HBEGF, MMW and HMW complexes bind to PDGFB, and HMW complex binds to FGF2. Interacts with CTRP9 via the C1q domain (heterotrimeric complex). HMW complexes are more extensively glycosylated than smaller oligomers. Hydroxylation and glycosylation of the lysine residues within the collagen-like domain of adiponectin seem to be critically involved in regulating the formation and/or secretion of HMW complexes and consequently contribute to the insulin-sensitizing activity of adiponectin in hepatocytes. Post-translationally, O-glycosylated. Not N-glycosylated O-linked glycans on hydroxylysine residues consist of Glc-Gal disaccharides bound to the oxygen atom of post-translationally added hydroxyl groups. O-linked glycosylation in the N-terminal is disialylated with the structure Neu5Acalpha2-&gt;8Neu5Acalpha2-&gt;3Gal. Sialylated by alpha 2,8-sialyltransferase III. In terms of processing, succination of Cys-39 by the Krebs cycle intermediate fumarate, which leads to S-(2-succinyl)cysteine residues, inhibits polymerization and secretion of adiponectin. Adiponectin is a major target for succination in both adipocytes and adipose tissue of diabetic mice. It was proposed that succination of proteins is a biomarker of mitochondrial stress and accumulation of Krebs cycle intermediates in adipose tissue in diabetes and that succination of adiponectin may contribute to the decrease in plasma adiponectin in diabetes. Synthesized exclusively by adipocytes and secreted into plasma.

The protein resides in the secreted. Polymerization and secretion of adiponectin is inhibited by succination of cysteine residues by the Krebs cycle intermediate fumarate, which leads to S-(2-succinyl)cysteine residues. Functionally, important adipokine involved in the control of fat metabolism and insulin sensitivity, with direct anti-diabetic, anti-atherogenic and anti-inflammatory activities. Stimulates AMPK phosphorylation and activation in the liver and the skeletal muscle, enhancing glucose utilization and fatty-acid combustion. Antagonizes TNF-alpha by negatively regulating its expression in various tissues such as liver and macrophages, and also by counteracting its effects. Inhibits endothelial NF-kappa-B signaling through a cAMP-dependent pathway. May play a role in cell growth, angiogenesis and tissue remodeling by binding and sequestering various growth factors with distinct binding affinities, depending on the type of complex, LMW, MMW or HMW. This chain is Adiponectin (Adipoq), found in Mus musculus (Mouse).